The sequence spans 400 residues: Serine/threonine transporter SstT (400 aa).

A run of 9 helical transmembrane segments spans residues 14-34, 48-68, 76-96, 136-156, 177-197, 211-231, 285-305, 311-331, and 349-371; these read IIIA…VTPY, SVAP…FQVG, VLLL…IASL, AISE…GLAM, IIHK…AVTF, LLAV…PILV, IPLG…VLTL, LGIH…TISA, and CSLF…IISV.

It belongs to the dicarboxylate/amino acid:cation symporter (DAACS) (TC 2.A.23) family.

It is found in the cell inner membrane. It catalyses the reaction L-serine(in) + Na(+)(in) = L-serine(out) + Na(+)(out). The enzyme catalyses L-threonine(in) + Na(+)(in) = L-threonine(out) + Na(+)(out). Its function is as follows. Involved in the import of serine and threonine into the cell, with the concomitant import of sodium (symport system). The polypeptide is Serine/threonine transporter SstT (Acinetobacter baumannii (strain ATCC 17978 / DSM 105126 / CIP 53.77 / LMG 1025 / NCDC KC755 / 5377)).